Here is a 102-residue protein sequence, read N- to C-terminus: Small ribosomal subunit protein uS10 (102 aa).

This sequence belongs to the universal ribosomal protein uS10 family. In terms of assembly, part of the 30S ribosomal subunit.

Functionally, involved in the binding of tRNA to the ribosomes. This chain is Small ribosomal subunit protein uS10, found in Pelagibacter ubique (strain HTCC1062).